A 436-amino-acid polypeptide reads, in one-letter code: F-box/LRR-repeat protein 20 (436 aa).

The F-box domain occupies 22–68 (AVINKKLPKELLLRIFSFLDVVTLCRCAQVSRAWNVLALDGSNWQRI). LRR repeat units follow at residues 74-100 (QRDIEGRVVENISKRCGGFLRKLSLRG), 101-126 (CLGVGDNALRTFAQNCRNIEVLNLNG), 127-152 (CTKTTDATCTSLSKFCSKLRHLDLAS), 153-178 (CTSITNMSLKALSEGCPLLEQLNISW), 179-204 (CDQVTKDGIQALVRGCGGLKALFLKG), 205-230 (CTQLEDEALKYIGAHCPELVTLNLQT), 231-256 (CLQITDEGLITICRGCHKLQSLCASG), 257-282 (CSNITDAILNALGQNCPRLRILEVAR), 283-308 (CSQLTDVGFTTLARNCHELEKMDLEE), 309-334 (CVQITDSTLIQLSIHCPRLQVLSLSH), 335-363 (CELITDDGIRHLGNGACAHDQLEVIELDN), 364-388 (CPLITDASLEHLKSCHSLERIELYD), and 389-414 (CQQITRAGIKRLRTHLPNIKVHAYFA). Thr-417 bears the Phosphothreonine mark. Ser-421 carries the phosphoserine modification.

In terms of assembly, interacts with SKP1 and CUL1.

The protein localises to the cytoplasm. Functionally, substrate-recognition component of the SCF (SKP1-CUL1-F-box protein)-type E3 ubiquitin ligase complex. Role in neural transmission. This is F-box/LRR-repeat protein 20 (FBXL20) from Bos taurus (Bovine).